The sequence spans 128 residues: MAAAVEALYVVLEREGAILPRQEGFSGVYVFFSPINFVIPPMGAVMLSLRLRVCIPPGYFGRFLALTDVNQPDVFTESYIMTPDMTEELSVVLFNHGDQFFYGHAGMAVVRLMLIRVVFPVVRQASNV.

Topologically, residues 1–26 (MAAAVEALYVVLEREGAILPRQEGFS) are cytoplasmic. Residues 27 to 47 (GVYVFFSPINFVIPPMGAVML) traverse the membrane as a helical segment. At 48-99 (SLRLRVCIPPGYFGRFLALTDVNQPDVFTESYIMTPDMTEELSVVLFNHGDQ) the chain is on the extracellular side. The chain crosses the membrane as a helical span at residues 100–120 (FFYGHAGMAVVRLMLIRVVFP). At 121–128 (VVRQASNV) the chain is on the cytoplasmic side. Residues 125–128 (ASNV) carry the PBZ domain binding motif motif.

This sequence belongs to the adenoviridae E4-ORF1 family. As to quaternary structure, may interact with host PDZ proteins through the PDZ domain binding motif (PBM), namely host DLG1, PATJ and TJP2.

It is found in the host membrane. Its function is as follows. May modulate tight-junctions functions of infected cells through interactions with PDZ proteins. E4 ORF1 has ben show for Adenovirus 9 to interact with protein involved in tight junction regulation. May play a role in mTOR activation by activating PI3-kinase, thus overriding cellular checkpoint for translation. The sequence is that of Early 4 ORF1 protein from Human adenovirus C serotype 2 (HAdV-2).